The chain runs to 404 residues: MADKVLKEKRRLFVRSVAMGTINGLLDELLETRVLNQEEVEIVRGENATVMDKARALIDSVIRKGPQACQICINHICGDDPHLAGVLELSTGSQSGKCLTVQESQAVVPPFPAPQTVQDNPVKPASSEPRGSLKLCPPDIAQRLWKEKSAEIYPIMGKSIRTRLALIICNTEFENLPRRDGADVDIRDMKILLEDLGYSVDVRENLTASDMAIELKAFAARPEHKSSDSTFLVLMSHGIQAGICGKKYSEEVPDVLEVNTVFQILNTLNCPSLKDKPKVIIIQACRGEKQGVVWIKDSVGPSGNSSLLAAEDFEYDAIKKAHIEKDFIAFCSSTPDNVSWRHPLLGSLFIIKLIKILQEHAWSCGLEEIFRKVRFSFELADGRAQMPTAERVTLTRSFYLFPGH.

The 91-residue stretch at 1-91 (MADKVLKEKR…HLAGVLELST (91 aa)) folds into the CARD domain. Positions 1 to 119 (MADKVLKEKR…PFPAPQTVQD (119 aa)) are excised as a propeptide. Positions 111-132 (FPAPQTVQDNPVKPASSEPRGS) are disordered. Active-site residues include histidine 237 and cysteine 285. A propeptide spanning residues 298–316 (SVGPSGNSSLLAAEDFEYD) is cleaved from the precursor. The residue at position 302 (serine 302) is a Phosphoserine.

The protein belongs to the peptidase C14A family. In terms of assembly, heterotetramer that consists of two anti-parallel arranged heterodimers, each one formed by a 20 kDa (Caspase-1 subunit p20) and a 10 kDa (Caspase-1 subunit p10) subunit. May be a component of the inflammasome, a protein complex which also includes PYCARD, CARD8 and NLRP2 and whose function would be the activation of pro-inflammatory caspases. Component of the AIM2 PANoptosome complex, a multiprotein complex that drives inflammatory cell death (PANoptosis). Both the p10 and p20 subunits interact with MEFV. Interacts with CARD17P/INCA and CARD18. Interacts with SERPINB1; this interaction regulates CASP1 activity. As to quaternary structure, heterotetramer that consists of two anti-parallel arranged heterodimers, each one formed by a 20 kDa (Caspase-1 subunit p20) and a 10 kDa (Caspase-1 subunit p10) subunit. The two subunits are derived from the precursor sequence by an autocatalytic mechanism. In terms of processing, ubiquitinated via 'Lys-11'-linked polyubiquitination. Deubiquitinated by USP8.

It is found in the cytoplasm. It localises to the cell membrane. The catalysed reaction is Strict requirement for an Asp residue at position P1 and has a preferred cleavage sequence of Tyr-Val-Ala-Asp-|-.. In terms of biological role, thiol protease involved in a variety of inflammatory processes by proteolytically cleaving other proteins, such as the precursors of the inflammatory cytokines interleukin-1 beta (IL1B) and interleukin 18 (IL18) as well as the pyroptosis inducer Gasdermin-D (GSDMD), into active mature peptides. Plays a key role in cell immunity as an inflammatory response initiator: once activated through formation of an inflammasome complex, it initiates a pro-inflammatory response through the cleavage of the two inflammatory cytokines IL1B and IL18, releasing the mature cytokines which are involved in a variety of inflammatory processes. Cleaves a tetrapeptide after an Asp residue at position P1. Also initiates pyroptosis, a programmed lytic cell death pathway, through cleavage of GSDMD. In contrast to cleavage of interleukin IL1B, recognition and cleavage of GSDMD is not strictly dependent on the consensus cleavage site but depends on an exosite interface on CASP1 that recognizes and binds the Gasdermin-D, C-terminal (GSDMD-CT) part. Cleaves and activates CASP7 in response to bacterial infection, promoting plasma membrane repair. Upon inflammasome activation, during DNA virus infection but not RNA virus challenge, controls antiviral immunity through the cleavage of CGAS, rendering it inactive. In apoptotic cells, cleaves SPHK2 which is released from cells and remains enzymatically active extracellularly. The polypeptide is Caspase-1 (CASP1) (Sus scrofa (Pig)).